A 205-amino-acid polypeptide reads, in one-letter code: Large ribosomal subunit protein uL4 (205 aa).

The tract at residues 65 to 99 (RQKGTGGARHGSRKSPTFRHGGVYKGPTPRSHGHD) is disordered.

Belongs to the universal ribosomal protein uL4 family. In terms of assembly, part of the 50S ribosomal subunit.

Its function is as follows. One of the primary rRNA binding proteins, this protein initially binds near the 5'-end of the 23S rRNA. It is important during the early stages of 50S assembly. It makes multiple contacts with different domains of the 23S rRNA in the assembled 50S subunit and ribosome. Functionally, forms part of the polypeptide exit tunnel. The polypeptide is Large ribosomal subunit protein uL4 (Ruegeria pomeroyi (strain ATCC 700808 / DSM 15171 / DSS-3) (Silicibacter pomeroyi)).